A 448-amino-acid polypeptide reads, in one-letter code: ATP-dependent protease ATPase subunit HslU (448 aa).

ATP is bound by residues Ile18, 60 to 65 (GVGKTE), Asp261, Glu326, and Arg398.

It belongs to the ClpX chaperone family. HslU subfamily. As to quaternary structure, a double ring-shaped homohexamer of HslV is capped on each side by a ring-shaped HslU homohexamer. The assembly of the HslU/HslV complex is dependent on binding of ATP.

It is found in the cytoplasm. Its function is as follows. ATPase subunit of a proteasome-like degradation complex; this subunit has chaperone activity. The binding of ATP and its subsequent hydrolysis by HslU are essential for unfolding of protein substrates subsequently hydrolyzed by HslV. HslU recognizes the N-terminal part of its protein substrates and unfolds these before they are guided to HslV for hydrolysis. The chain is ATP-dependent protease ATPase subunit HslU from Paraburkholderia phytofirmans (strain DSM 17436 / LMG 22146 / PsJN) (Burkholderia phytofirmans).